A 348-amino-acid polypeptide reads, in one-letter code: NADH-quinone oxidoreductase subunit H 1 (348 aa).

Helical transmembrane passes span 11–31, 83–103, 136–156, 172–192, 208–228, 268–288, 289–309, and 324–344; these read IYYI…LLTV, FAFL…FAVI, VGVL…VLAG, SAQM…VFML, GAWY…CSLA, MVTV…GPAF, LPGW…CMWI, and LGWK…GIVV.

Belongs to the complex I subunit 1 family. NDH-1 is composed of 14 different subunits. Subunits NuoA, H, J, K, L, M, N constitute the membrane sector of the complex.

It localises to the cell inner membrane. It carries out the reaction a quinone + NADH + 5 H(+)(in) = a quinol + NAD(+) + 4 H(+)(out). In terms of biological role, NDH-1 shuttles electrons from NADH, via FMN and iron-sulfur (Fe-S) centers, to quinones in the respiratory chain. The immediate electron acceptor for the enzyme in this species is believed to be ubiquinone. Couples the redox reaction to proton translocation (for every two electrons transferred, four hydrogen ions are translocated across the cytoplasmic membrane), and thus conserves the redox energy in a proton gradient. This subunit may bind ubiquinone. This chain is NADH-quinone oxidoreductase subunit H 1, found in Geobacter sulfurreducens (strain ATCC 51573 / DSM 12127 / PCA).